Consider the following 249-residue polypeptide: tRNA pseudouridine synthase A (249 aa).

The active-site Nucleophile is Asp-54. Substrate is bound at residue Tyr-111.

The protein belongs to the tRNA pseudouridine synthase TruA family. As to quaternary structure, homodimer.

It catalyses the reaction uridine(38/39/40) in tRNA = pseudouridine(38/39/40) in tRNA. Its function is as follows. Formation of pseudouridine at positions 38, 39 and 40 in the anticodon stem and loop of transfer RNAs. This chain is tRNA pseudouridine synthase A, found in Mycoplasma capricolum subsp. capricolum (strain California kid / ATCC 27343 / NCTC 10154).